We begin with the raw amino-acid sequence, 65 residues long: Large ribosomal subunit protein uL29 (65 aa).

This sequence belongs to the universal ribosomal protein uL29 family.

This chain is Large ribosomal subunit protein uL29, found in Bacteroides thetaiotaomicron (strain ATCC 29148 / DSM 2079 / JCM 5827 / CCUG 10774 / NCTC 10582 / VPI-5482 / E50).